Here is a 241-residue protein sequence, read N- to C-terminus: 1-(5-phosphoribosyl)-5-[(5-phosphoribosylamino)methylideneamino] imidazole-4-carboxamide isomerase (241 aa).

Aspartate 8 serves as the catalytic Proton acceptor. The Proton donor role is filled by aspartate 129.

The protein belongs to the HisA/HisF family.

The protein resides in the cytoplasm. It catalyses the reaction 1-(5-phospho-beta-D-ribosyl)-5-[(5-phospho-beta-D-ribosylamino)methylideneamino]imidazole-4-carboxamide = 5-[(5-phospho-1-deoxy-D-ribulos-1-ylimino)methylamino]-1-(5-phospho-beta-D-ribosyl)imidazole-4-carboxamide. It participates in amino-acid biosynthesis; L-histidine biosynthesis; L-histidine from 5-phospho-alpha-D-ribose 1-diphosphate: step 4/9. In Chloroflexus aurantiacus (strain ATCC 29364 / DSM 637 / Y-400-fl), this protein is 1-(5-phosphoribosyl)-5-[(5-phosphoribosylamino)methylideneamino] imidazole-4-carboxamide isomerase.